The sequence spans 445 residues: UPF0210 protein STK_02450 (445 aa).

It belongs to the UPF0210 family.

The polypeptide is UPF0210 protein STK_02450 (Sulfurisphaera tokodaii (strain DSM 16993 / JCM 10545 / NBRC 100140 / 7) (Sulfolobus tokodaii)).